The sequence spans 344 residues: Heat-inducible transcription repressor HrcA (344 aa).

The protein belongs to the HrcA family.

In terms of biological role, negative regulator of class I heat shock genes (grpE-dnaK-dnaJ and groELS operons). Prevents heat-shock induction of these operons. The chain is Heat-inducible transcription repressor HrcA from Streptococcus pyogenes serotype M6 (strain ATCC BAA-946 / MGAS10394).